A 155-amino-acid polypeptide reads, in one-letter code: Aspartate carbamoyltransferase regulatory chain (155 aa).

4 residues coordinate Zn(2+): Cys113, Cys118, Cys139, and Cys142.

The protein belongs to the PyrI family. In terms of assembly, contains catalytic and regulatory chains. Requires Zn(2+) as cofactor.

Its function is as follows. Involved in allosteric regulation of aspartate carbamoyltransferase. The polypeptide is Aspartate carbamoyltransferase regulatory chain (Methanoculleus marisnigri (strain ATCC 35101 / DSM 1498 / JR1)).